A 235-amino-acid polypeptide reads, in one-letter code: MRPSGRNNDQLRNLKVTHNFTKHAEGSVLIEFGDTKVICTASVVAGVPKFKKDSGEGWLTAEYGMLPRSTHTRMDREAARGKQSGRTQEIQRLIGRALRASVDLTAIGENTIKVDCDVIQADGGTRTASITGASLAIADAIEYMKQNGILDEQANPLLSQVAAISVGIYNNEPVLDLDYDEDSNAETDMNVVMNSNGGIIEIQGTAEGKDFSEEEFAKMLGLAKKGIKEIFATVF.

Residues Arg-86 and 124–126 (GTR) each bind phosphate.

This sequence belongs to the RNase PH family. As to quaternary structure, homohexameric ring arranged as a trimer of dimers.

It carries out the reaction tRNA(n+1) + phosphate = tRNA(n) + a ribonucleoside 5'-diphosphate. Functionally, phosphorolytic 3'-5' exoribonuclease that plays an important role in tRNA 3'-end maturation. Removes nucleotide residues following the 3'-CCA terminus of tRNAs; can also add nucleotides to the ends of RNA molecules by using nucleoside diphosphates as substrates, but this may not be physiologically important. Probably plays a role in initiation of 16S rRNA degradation (leading to ribosome degradation) during starvation. This is Ribonuclease PH from Francisella tularensis subsp. holarctica (strain FTNF002-00 / FTA).